Here is a 250-residue protein sequence, read N- to C-terminus: Ribonuclease HII (250 aa).

In terms of domain architecture, RNase H type-2 spans 66 to 250 (ELVAGVDEVG…TFAPVSDFFK (185 aa)). Residues Asp72, Glu73, and Asp164 each contribute to the a divalent metal cation site.

This sequence belongs to the RNase HII family. Requires Mn(2+) as cofactor. The cofactor is Mg(2+).

It localises to the cytoplasm. It catalyses the reaction Endonucleolytic cleavage to 5'-phosphomonoester.. In terms of biological role, endonuclease that specifically degrades the RNA of RNA-DNA hybrids. This is Ribonuclease HII from Lactobacillus helveticus (strain DPC 4571).